We begin with the raw amino-acid sequence, 330 residues long: Ribosomal RNA small subunit methyltransferase C (330 aa).

It belongs to the methyltransferase superfamily. RsmC family. As to quaternary structure, monomer.

It localises to the cytoplasm. The catalysed reaction is guanosine(1207) in 16S rRNA + S-adenosyl-L-methionine = N(2)-methylguanosine(1207) in 16S rRNA + S-adenosyl-L-homocysteine + H(+). Specifically methylates the guanine in position 1207 of 16S rRNA in the 30S particle. In Haemophilus influenzae (strain ATCC 51907 / DSM 11121 / KW20 / Rd), this protein is Ribosomal RNA small subunit methyltransferase C.